We begin with the raw amino-acid sequence, 426 residues long: Enolase 1 (426 aa).

Gln162 serves as a coordination point for (2R)-2-phosphoglycerate. Glu204 (proton donor) is an active-site residue. Residues Asp241, Glu284, and Asp311 each contribute to the Mg(2+) site. Residues Lys336, Arg365, Ser366, and Lys387 each coordinate (2R)-2-phosphoglycerate. The Proton acceptor role is filled by Lys336.

This sequence belongs to the enolase family. Mg(2+) is required as a cofactor.

It localises to the cytoplasm. The protein localises to the secreted. The protein resides in the cell surface. The enzyme catalyses (2R)-2-phosphoglycerate = phosphoenolpyruvate + H2O. Its pathway is carbohydrate degradation; glycolysis; pyruvate from D-glyceraldehyde 3-phosphate: step 4/5. Catalyzes the reversible conversion of 2-phosphoglycerate (2-PG) into phosphoenolpyruvate (PEP). It is essential for the degradation of carbohydrates via glycolysis. This Methanospirillum hungatei JF-1 (strain ATCC 27890 / DSM 864 / NBRC 100397 / JF-1) protein is Enolase 1.